The sequence spans 470 residues: Sugar transporter ESL1 (470 aa).

Positions 10 to 16 (LEAGLLL) match the Essential for the localization to the vacuole membrane motif. A run of 12 helical transmembrane segments spans residues 28-48 (ITAV…CFGC), 68-88 (VAQY…GAIF), 99-119 (KGTM…VALA), 130-150 (LSTG…IAEI), 157-177 (GAFV…FYVI), 186-206 (LALI…FIPE), 268-288 (VVIG…GLMY), 303-323 (IGSM…LILV), 332-352 (LLAS…SFCF), 368-388 (IGVV…PWII), 404-424 (LVTL…NFML), and 430-450 (GTFL…YAMV).

Belongs to the major facilitator superfamily. Sugar transporter (TC 2.A.1.1) family. In terms of tissue distribution, expressed in both shoots and roots. In roots, strongly expressed in pericycle and xylem parenchyma cells, and to a lesser extent in the root endodermis. In flowers, expressed in sepals.

Its subcellular location is the vacuole membrane. The protein resides in the vesicle. Sugar transporter. Transports monosaccharides across the vacuolar membrane independently from a proton gradient. May function coordinately with the vacuolar invertase to regulate osmotic pressure by affecting the accumulation of sugar in the cells under abiotic stress conditions. In Arabidopsis thaliana (Mouse-ear cress), this protein is Sugar transporter ESL1.